The chain runs to 391 residues: Elongation factor Tu 2 (391 aa).

The region spanning Lys-10–Glu-201 is the tr-type G domain. The segment at Gly-19–Thr-26 is G1. Gly-19 to Thr-26 lines the GTP pocket. Position 26 (Thr-26) interacts with Mg(2+). A G2 region spans residues Gly-55 to Ser-59. The interval Asp-76–Gly-79 is G3. GTP contacts are provided by residues Asp-76–His-80 and Asn-131–Asp-134. A G4 region spans residues Asn-131 to Asp-134. The tract at residues Ser-169 to Leu-171 is G5.

This sequence belongs to the TRAFAC class translation factor GTPase superfamily. Classic translation factor GTPase family. EF-Tu/EF-1A subfamily. As to quaternary structure, monomer.

It is found in the cytoplasm. The catalysed reaction is GTP + H2O = GDP + phosphate + H(+). Functionally, GTP hydrolase that promotes the GTP-dependent binding of aminoacyl-tRNA to the A-site of ribosomes during protein biosynthesis. The sequence is that of Elongation factor Tu 2 from Bartonella bacilliformis (strain ATCC 35685 / KC583 / Herrer 020/F12,63).